The following is a 461-amino-acid chain: Tip elongation protein 1 (461 aa).

The 48-residue stretch at 22-69 folds into the CAP-Gly domain; sequence GEVENRKGVYVGLELLPEFAEFGKNRGVVDGREYFKTKNNEKTGIFVP. Ser82, Ser84, Ser289, Ser294, and Ser305 each carry phosphoserine. Positions 134–418 form a coiled coil; that stretch reads TEKILQKRIE…RMSPAEFELE (285 aa). Residues 278–303 are compositionally biased toward polar residues; that stretch reads KANSSTANEKLSHMESSSPTLTNASF. The tract at residues 278 to 323 is disordered; sequence KANSSTANEKLSHMESSSPTLTNASFESPKRGKGSNDLPENHPQRR. Phosphothreonine is present on Thr367. The tract at residues 417–437 is disordered; it reads LETTQEVEENDSDSHDDEETW.

Monomer. Interacts with tea1 and tea2. Interacts with tea4 in the presence of tea1.

The protein localises to the cytoplasm. It is found in the cytoskeleton. Has a role in stabilizing and targeting the growing tips of the microtubules along the long axis of the cell, directing them to the ends of the cell. Acts as a cargo for tea2. The polypeptide is Tip elongation protein 1 (tip1) (Schizosaccharomyces pombe (strain 972 / ATCC 24843) (Fission yeast)).